The following is a 1555-amino-acid chain: Regulating synaptic membrane exocytosis protein 2 (1555 aa).

The interval 1–35 (MSAPLGPRGRPAPTPAASQPPPQPEMPDLSHLTEE) is disordered. A compositionally biased stretch (pro residues) spans 10–25 (RPAPTPAASQPPPQPE). The RabBD domain occupies 26–154 (MPDLSHLTEE…TKSGAWFYNS (129 aa)). The FYVE-type zinc-finger motif lies at 86–142 (KGDAPTCGICHKTKFADGCGHNCSYCQTKFCARCGGRVSLRSNKVMWVCNLCRKQQE). Zn(2+)-binding residues include C92, C95, C108, C111, C116, C119, C134, and C137. A compositionally biased stretch (polar residues) spans 154-163 (SGSNTPQQPD). The disordered stretch occupies residues 154–530 (SGSNTPQQPD…STPEYTSCDD (377 aa)). Over residues 170–185 (LRSEEAPQEKKAKLHE) the composition is skewed to basic and acidic residues. Residues 259–268 (YVPSDSTMPR) show a composition bias toward polar residues. 4 stretches are compositionally biased toward basic and acidic residues: residues 287-298 (EPDHLNYRDSNR), 317-335 (RDEY…RYRS), 351-370 (EQMR…RHSD), and 379-403 (EDSR…RRAA). S369 is subject to Phosphoserine. A compositionally biased stretch (polar residues) spans 418–432 (AQGQSSYPQRTTNHS). A compositionally biased stretch (basic and acidic residues) spans 444–461 (DRPELRRADSLRKQHHLD). Residues 479 to 490 (RNDSLSSDQSES) are compositionally biased toward polar residues. Residues 497 to 506 (RPHKSKKGGK) show a composition bias toward basic residues. The PDZ domain maps to 590–676 (DGSVPRDSGA…EPQVELVVSR (87 aa)). A Phosphothreonine modification is found at T611. The segment at 682–716 (PRIPDSTHAQLESSSSSFESQKMDRPSISVTSPMS) is disordered. S713 and S716 each carry phosphoserine. In terms of domain architecture, C2 1 spans 743-866 (FVPRVQIKLW…ALLDDEPHWY (124 aa)). Disordered stretches follow at residues 877–913 (PLPH…VSDY), 935–1145 (STLS…KRNS), 1180–1207 (YRSG…DVSA), 1268–1288 (LEKN…TSGK), and 1307–1332 (KSRS…QRST). The span at 935–953 (STLSVPEQVMSSNHCSPSG) shows a compositional bias: polar residues. Basic and acidic residues-rich tracts occupy residues 996 to 1014 (RMDR…RDSH) and 1025 to 1071 (QTSE…ERAD). Residues 1092–1114 (ALSRSHPRTGSVQTSPSSTPVTG) are compositionally biased toward low complexity. At S1106 the chain carries Phosphoserine. Composition is skewed to basic and acidic residues over residues 1128-1141 (TLER…DSTR) and 1180-1190 (YRSGWDPHRGA). 2 positions are modified to phosphoserine: S1200 and S1276. Residues 1401 to 1519 (AMGDIQVGMM…ELSNMVIGWF (119 aa)) form the C2 2 domain. S1540 and S1543 each carry phosphoserine.

As to quaternary structure, heterodimer with PCLO. Part of a ternary complex involving PCLO and EPAC2. Interacts with RAB3C, RAB3D and RAB26. Binds RAB3A and RAB3B that have been activated by GTP-binding. Interacts with TSPOAP1 and RIMBP2. Interacts with PPFIA3 and PPFIA4. Interacts via its zinc finger with the first C2 domain of UNC13A. Forms a complex consisting of UNC13A, RIMS2 and RAB3A. In terms of tissue distribution, highly expressed in hippocampus, brain cortex, cerebellum and olfactory bulb. Detected at intermediate levels in midbrain, hindbrain and spinal cord, and at low levels in testis.

Its subcellular location is the cell membrane. The protein localises to the synapse. It localises to the presynaptic cell membrane. Its function is as follows. Rab effector involved in exocytosis. May act as scaffold protein. Plays a role in dendrite formation by melanocytes. The chain is Regulating synaptic membrane exocytosis protein 2 (Rims2) from Rattus norvegicus (Rat).